A 564-amino-acid polypeptide reads, in one-letter code: MDVDSIFKNTEETNKKRNPEEADSLEPASSRRRLAEENSDEENEEFDEEGGRFFGSGLKKSEKTVLDFLDEQEAQEEPASLTPTELKRMVVRLEKTINNNQELRIKYSTSPQRFIESEADLDLEIRSFNVLSEYPILIPIFLKLDCVSTFLELMNHENADITITVLELLIELTDEDVDPDALNSLFTSLIDSGLLPLLSNTIKRFDESNEEDRHGVYCVLSLMENLLSVDNSICSIIVENTTLVEWLLSRSSVDETSISTNLQYAVEILAIILANSKEAKLKVCNLNGIDLLLRRISPYRLRDPTQGSEEEMMENVFDCLCSLVQETKGKSLFLKEEGIELCILNMKHKGKSRYSTIKVLDYLLFGPLSTPYCIRFVEAGGLKYIFAAFMKISAADTLEHILAILASLFRSLPADTVERVRFLRKFIENDFEKMKRLFKIYDRLRIQLKGIDQSRKLDFSPDSEEKSTKWFLQQIDHGLFPFQSTVLILSWLCVENTVTLKKIKMLFSEASIPIDELTDALKNYHENLEEPTVESEEVEANDSYYRIDEKPMVTVLLGSMQASV.

Residues 1–56 (MDVDSIFKNTEETNKKRNPEEADSLEPASSRRRLAEENSDEENEEFDEEGGRFFGS) form a disordered region. The segment covering 9–20 (NTEETNKKRNPE) has biased composition (basic and acidic residues). A compositionally biased stretch (acidic residues) spans 37–48 (ENSDEENEEFDE). A Phosphoserine modification is found at Ser-39. 2 HEAT repeats span residues 83–133 (PTEL…VLSE) and 138–177 (IPIF…DEDV). ARM repeat units follow at residues 179–229 (PDAL…LLSV), 230–276 (DNSI…LANS), 277–326 (KEAK…LVQE), 328–366 (KGKS…LLFG), and 367–411 (PLST…LFRS). Positions 465 to 528 (EKSTKWFLQQ…DALKNYHENL (64 aa)) form a coiled coil.

The protein localises to the nucleus. Functionally, probable spliceosomal component involved in the activation of pre-mRNA splicing. The chain is Beta-catenin-like protein 1 homolog (ctnnbl1) from Schizosaccharomyces pombe (strain 972 / ATCC 24843) (Fission yeast).